The sequence spans 492 residues: Cytochrome P450 2B19 (492 aa).

At S129 the chain carries Phosphoserine; by PKA. Residue C437 participates in heme binding.

Belongs to the cytochrome P450 family. The cofactor is heme. In terms of tissue distribution, expressed only in differentiated keratinocytes in skin.

Its subcellular location is the endoplasmic reticulum membrane. It localises to the microsome membrane. It catalyses the reaction an organic molecule + reduced [NADPH--hemoprotein reductase] + O2 = an alcohol + oxidized [NADPH--hemoprotein reductase] + H2O + H(+). Its function is as follows. Cytochromes P450 are a group of heme-thiolate monooxygenases. In liver microsomes, this enzyme is involved in an NADPH-dependent electron transport pathway. It oxidizes a variety of structurally unrelated compounds, including steroids, fatty acids, and xenobiotics. In Mus musculus (Mouse), this protein is Cytochrome P450 2B19 (Cyp2b19).